We begin with the raw amino-acid sequence, 351 residues long: UDP-3-O-acylglucosamine N-acyltransferase (351 aa).

Residue His240 is the Proton acceptor of the active site.

The protein belongs to the transferase hexapeptide repeat family. LpxD subfamily. Homotrimer.

It carries out the reaction a UDP-3-O-[(3R)-3-hydroxyacyl]-alpha-D-glucosamine + a (3R)-hydroxyacyl-[ACP] = a UDP-2-N,3-O-bis[(3R)-3-hydroxyacyl]-alpha-D-glucosamine + holo-[ACP] + H(+). It participates in bacterial outer membrane biogenesis; LPS lipid A biosynthesis. Its function is as follows. Catalyzes the N-acylation of UDP-3-O-acylglucosamine using 3-hydroxyacyl-ACP as the acyl donor. Is involved in the biosynthesis of lipid A, a phosphorylated glycolipid that anchors the lipopolysaccharide to the outer membrane of the cell. This is UDP-3-O-acylglucosamine N-acyltransferase from Pseudomonas fluorescens (strain SBW25).